Here is a 292-residue protein sequence, read N- to C-terminus: N-acetylneuraminate lyase (292 aa).

Residues Ser46 and Thr47 each contribute to the aceneuramate site. Tyr135 (proton donor) is an active-site residue. The active-site Schiff-base intermediate with substrate is Lys163. Aceneuramate is bound by residues Thr165, Gly187, Asp189, Glu190, and Ser206.

It belongs to the DapA family. NanA subfamily. Homotetramer.

Its subcellular location is the cytoplasm. The catalysed reaction is aceneuramate = aldehydo-N-acetyl-D-mannosamine + pyruvate. It participates in amino-sugar metabolism; N-acetylneuraminate degradation; D-fructose 6-phosphate from N-acetylneuraminate: step 1/5. Catalyzes the reversible aldol cleavage of N-acetylneuraminic acid (sialic acid; Neu5Ac) to form pyruvate and N-acetylmannosamine (ManNAc) via a Schiff base intermediate. This chain is N-acetylneuraminate lyase, found in Lactiplantibacillus plantarum (strain ATCC BAA-793 / NCIMB 8826 / WCFS1) (Lactobacillus plantarum).